Consider the following 441-residue polypeptide: tRNA-2-methylthio-N(6)-dimethylallyladenosine synthase (441 aa).

One can recognise an MTTase N-terminal domain in the interval 5 to 120 (KLLYIETFGC…LPEMVRAAEQ (116 aa)). C14, C50, C83, C158, C162, and C165 together coordinate [4Fe-4S] cluster. The 231-residue stretch at 144-374 (EGGGVTRFVT…QGLQRDMTIE (231 aa)) folds into the Radical SAM core domain. The TRAM domain maps to 377–439 (AGFVGTCQAV…PNSLLGELAV (63 aa)).

This sequence belongs to the methylthiotransferase family. MiaB subfamily. Monomer. [4Fe-4S] cluster serves as cofactor.

The protein localises to the cytoplasm. It carries out the reaction N(6)-dimethylallyladenosine(37) in tRNA + (sulfur carrier)-SH + AH2 + 2 S-adenosyl-L-methionine = 2-methylsulfanyl-N(6)-dimethylallyladenosine(37) in tRNA + (sulfur carrier)-H + 5'-deoxyadenosine + L-methionine + A + S-adenosyl-L-homocysteine + 2 H(+). Functionally, catalyzes the methylthiolation of N6-(dimethylallyl)adenosine (i(6)A), leading to the formation of 2-methylthio-N6-(dimethylallyl)adenosine (ms(2)i(6)A) at position 37 in tRNAs that read codons beginning with uridine. The chain is tRNA-2-methylthio-N(6)-dimethylallyladenosine synthase from Geobacter metallireducens (strain ATCC 53774 / DSM 7210 / GS-15).